Reading from the N-terminus, the 515-residue chain is Cytochrome P450 705A22 (515 aa).

The helical transmembrane segment at 9-29 (FQNCFIFILIFLLTFLCFFFF) threads the bilayer. Position 454 (Cys454) interacts with heme.

This sequence belongs to the cytochrome P450 family. It depends on heme as a cofactor.

It is found in the membrane. In terms of biological role, plays a role in the gravitropic response of the inflorescence stems and roots. May affect the synthesis of flavonols that have a role in regulating auxin transport. The protein is Cytochrome P450 705A22 of Arabidopsis thaliana (Mouse-ear cress).